A 507-amino-acid chain; its full sequence is Tryptophan aminotransferase-related protein 2 (507 aa).

The disordered stretch occupies residues 91–135; the sequence is PPPHHHHHDAGLATRSSDAAVHRRARTASSMAPSTGKPAVTTDSV. Residues Tyr169, 211-212, Asn282, 304-307, 327-330, and Arg338 each bind pyridoxal 5'-phosphate; these read ST, DLAY, and TVSK. N6-(pyridoxal phosphate)lysine is present on Lys330.

It belongs to the alliinase family. It depends on pyridoxal 5'-phosphate as a cofactor. In terms of tissue distribution, widely expressed.

The enzyme catalyses L-tryptophan + 2-oxoglutarate = indole-3-pyruvate + L-glutamate. It functions in the pathway plant hormone metabolism; auxin biosynthesis. Probable tryptophan aminotransferase involved in auxin (IAA) biosynthesis. Required for auxin production to initiate multiple change in growth in response to environmental and developmental cues. Functions upstream of YUCCA1 in auxin biosynthesis. Required for polar auxin transport. This Oryza sativa subsp. japonica (Rice) protein is Tryptophan aminotransferase-related protein 2.